Here is a 495-residue protein sequence, read N- to C-terminus: Ectonucleoside triphosphate diphosphohydrolase 2 (495 aa).

The Cytoplasmic segment spans residues 2–4 (ARR). The helical transmembrane segment at 5–25 (AAAVLLLLALGCLLGILLLCL) threads the bilayer. At 26–465 (GSGDARGPPS…SHRSMLYNYW (440 aa)) the chain is on the extracellular side. The N-linked (GlcNAc...) asparagine glycan is linked to asparagine 62. A disulfide bridge links cysteine 73 with cysteine 97. Residue glutamate 162 is the Proton acceptor of the active site. 201 to 205 (GASTQ) contacts ATP. Disulfide bonds link cysteine 239/cysteine 286, cysteine 267/cysteine 311, cysteine 324/cysteine 329, and cysteine 378/cysteine 400. An N-linked (GlcNAc...) asparagine glycan is attached at asparagine 297. N-linked (GlcNAc...) asparagine glycans are attached at residues asparagine 418 and asparagine 444. A helical transmembrane segment spans residues 466 to 486 (VILILLFVITTLTALLTAVYL). The Cytoplasmic portion of the chain corresponds to 487 to 495 (LRRSKSSTI).

Belongs to the GDA1/CD39 NTPase family. Requires Ca(2+) as cofactor. Mg(2+) is required as a cofactor.

Its subcellular location is the membrane. In terms of biological role, in the nervous system, could hydrolyze ATP and other nucleotides to regulate purinergic neurotransmission. Hydrolyzes ADP only to a marginal extent. The chain is Ectonucleoside triphosphate diphosphohydrolase 2 (ENTPD2) from Gallus gallus (Chicken).